An 852-amino-acid chain; its full sequence is Probable LRR receptor-like serine/threonine-protein kinase At1g05700 (852 aa).

The first 25 residues, 1–25 (MEEFRFLYLIYSAAFALCLVVSVLA), serve as a signal peptide directing secretion. The Extracellular segment spans residues 26–510 (QDQSGFISID…SCRKSNSKKL (485 aa)). 9 N-linked (GlcNAc...) asparagine glycosylation sites follow: asparagine 138, asparagine 182, asparagine 231, asparagine 240, asparagine 258, asparagine 293, asparagine 400, asparagine 415, and asparagine 431. LRR repeat units follow at residues 410-432 (RITSLNLSSSGLTGHISSSFSNL), 434-457 (MIQELDLSNNGLTGDIPEFLSKLK), and 458-479 (FLRVLNLENNTLTGSVPSELLE). Asparagine 466 carries an N-linked (GlcNAc...) asparagine glycan. A helical membrane pass occupies residues 511–531 (VIPLVASFAALFILLLLSGVF). Over 532–852 (WRIRNRRNKS…LQREESNKNY (321 aa)) the chain is Cytoplasmic. Threonine 561 is subject to Phosphothreonine. One can recognise a Protein kinase domain in the interval 570–843 (NNFGQVLGKG…HIVRGLNECL (274 aa)). Residues 576–584 (LGKGGFGTV) and lysine 597 contribute to the ATP site. Tyrosine 642 is modified (phosphotyrosine). Aspartate 693 serves as the catalytic Proton acceptor. A phosphoserine mark is found at serine 697 and serine 727. 2 positions are modified to phosphothreonine: threonine 728 and threonine 733.

Belongs to the protein kinase superfamily. Ser/Thr protein kinase family.

The protein localises to the membrane. It catalyses the reaction L-seryl-[protein] + ATP = O-phospho-L-seryl-[protein] + ADP + H(+). The enzyme catalyses L-threonyl-[protein] + ATP = O-phospho-L-threonyl-[protein] + ADP + H(+). This is Probable LRR receptor-like serine/threonine-protein kinase At1g05700 from Arabidopsis thaliana (Mouse-ear cress).